Reading from the N-terminus, the 253-residue chain is tRNA 2'-phosphotransferase 1 (253 aa).

Met1 carries the post-translational modification N-acetylmethionine. Disordered stretches follow at residues 1–29 (MNFS…DRDV) and 225–253 (KPLS…RIQQ). At Ser240 the chain carries Phosphoserine. The segment covering 243–253 (HSSRERRRIQQ) has biased composition (basic residues).

The protein belongs to the KptA/TPT1 family. Widely expressed. Weakly or not expressed in lung, spleen, small intestine and peripheral blood leukocytes.

It carries out the reaction 2'-phospho-[ligated tRNA] + NAD(+) = mature tRNA + ADP-alpha-D-ribose 1'',2''-cyclic phosphate + nicotinamide. Catalyzes the last step of tRNA splicing, the transfer of the splice junction 2'-phosphate from ligated tRNA to NAD to produce ADP-ribose 1''-2'' cyclic phosphate. The chain is tRNA 2'-phosphotransferase 1 (TRPT1) from Homo sapiens (Human).